Consider the following 297-residue polypeptide: Ribosomal RNA small subunit methyltransferase H (297 aa).

S-adenosyl-L-methionine-binding positions include Gly37–His39, Asp56, Phe87, Asp102, and His109.

The protein belongs to the methyltransferase superfamily. RsmH family.

The protein resides in the cytoplasm. It carries out the reaction cytidine(1402) in 16S rRNA + S-adenosyl-L-methionine = N(4)-methylcytidine(1402) in 16S rRNA + S-adenosyl-L-homocysteine + H(+). Specifically methylates the N4 position of cytidine in position 1402 (C1402) of 16S rRNA. The chain is Ribosomal RNA small subunit methyltransferase H from Borrelia turicatae (strain 91E135).